An 832-amino-acid polypeptide reads, in one-letter code: Protein wech (832 aa).

The segment covering 1–14 (MMELLSNNSVPQQM) has biased composition (polar residues). The interval 1-42 (MMELLSNNSVPQQMASSNAPSANNVAHSSTANGSGGGSVSSN) is disordered. The segment covering 15-32 (ASSNAPSANNVAHSSTAN) has biased composition (low complexity). Position 107 is a phosphoserine (serine 107). B box-type zinc fingers lie at residues 118–163 (NSSI…IVSL) and 184–224 (SGNF…YASI). Zn(2+)-binding residues include cysteine 123, cysteine 126, cysteine 145, histidine 149, cysteine 189, histidine 192, cysteine 211, and histidine 216. 3 positions are modified to phosphoserine: serine 470, serine 475, and serine 506. NHL repeat units lie at residues 537–580 (SLSF…FNPD), 584–627 (KFKF…FTAS), 631–674 (LLKF…FDSE), 680–722 (QIVF…IDPD), and 727–770 (LSVK…FNQN).

Interacts with the head domain of rhea and the kinase domain of Ilk. Interacts with AGO1. Interacts with mei-P26. In terms of tissue distribution, expressed in ovarian germline stem cells (at protein level). Expressed ubiquitously in all epithelial cells during early stages of embryogenesis. Specifically expressed at epidermal muscle attachment site.

Functionally, vital for larval development. Plays a role in tumor formation. A crucial component for the physical link between integrins and the cytoskeleton in the epidermal muscle attachment sites. This Drosophila melanogaster (Fruit fly) protein is Protein wech (wech).